Consider the following 303-residue polypeptide: L(+)-tartrate dehydratase subunit alpha (303 aa).

Residues Cys71, Cys190, and Cys277 each coordinate iron-sulfur cluster.

The protein belongs to the class-I fumarase family. Tetramer of two alpha and two beta subunits. The cofactor is iron-sulfur cluster.

It catalyses the reaction (2R,3R)-tartrate = oxaloacetate + H2O. The chain is L(+)-tartrate dehydratase subunit alpha (ttdA) from Escherichia coli O6:K15:H31 (strain 536 / UPEC).